We begin with the raw amino-acid sequence, 865 residues long: Protein fluG (865 aa).

Positions 442–533 (PGVKYVWTQF…VMTWWKSEQG (92 aa)) constitute a GS beta-grasp domain. The GS catalytic domain maps to 540–865 (PRTNLLNINN…ARRKWLVERY (326 aa)).

This sequence belongs to the glutamine synthetase family.

It localises to the cytoplasm. Functionally, may function as a GSI-related enzyme in synthesizing a small diffusible factor that acts as an extracellular signal directing asexual sporulation and perhaps other aspects of colony growth. May be involved in brlA activation (an early transcriptional regulator for conidiation specific gene). This chain is Protein fluG (fluG), found in Emericella nidulans (strain FGSC A4 / ATCC 38163 / CBS 112.46 / NRRL 194 / M139) (Aspergillus nidulans).